Reading from the N-terminus, the 430-residue chain is Adenylosuccinate synthetase (430 aa).

GTP contacts are provided by residues 12–18 and 40–42; these read GDEGKGK and GHT. D13 functions as the Proton acceptor in the catalytic mechanism. Residues D13 and G40 each coordinate Mg(2+). Residues 13 to 16, 38 to 41, T129, R143, Q224, T239, and R303 contribute to the IMP site; these read DEGK and NAGH. Residue H41 is the Proton donor of the active site. Residue 299–305 coordinates substrate; that stretch reads TVSNRKR. GTP-binding positions include R305, 331–333, and 413–415; these read KLD and STG.

The protein belongs to the adenylosuccinate synthetase family. As to quaternary structure, homodimer. The cofactor is Mg(2+).

Its subcellular location is the cytoplasm. It catalyses the reaction IMP + L-aspartate + GTP = N(6)-(1,2-dicarboxyethyl)-AMP + GDP + phosphate + 2 H(+). Its pathway is purine metabolism; AMP biosynthesis via de novo pathway; AMP from IMP: step 1/2. Plays an important role in the de novo pathway of purine nucleotide biosynthesis. Catalyzes the first committed step in the biosynthesis of AMP from IMP. The sequence is that of Adenylosuccinate synthetase from Ehrlichia chaffeensis (strain ATCC CRL-10679 / Arkansas).